The primary structure comprises 224 residues: Ribosomal RNA small subunit methyltransferase I (224 aa).

It belongs to the methyltransferase superfamily. RsmI family.

It localises to the cytoplasm. The catalysed reaction is cytidine(1402) in 16S rRNA + S-adenosyl-L-methionine = 2'-O-methylcytidine(1402) in 16S rRNA + S-adenosyl-L-homocysteine + H(+). Functionally, catalyzes the 2'-O-methylation of the ribose of cytidine 1402 (C1402) in 16S rRNA. This is Ribosomal RNA small subunit methyltransferase I from Borrelia garinii subsp. bavariensis (strain ATCC BAA-2496 / DSM 23469 / PBi) (Borreliella bavariensis).